The sequence spans 396 residues: S-adenosylmethionine synthase 2 (396 aa).

Glutamate 13 contacts Mg(2+). Residue histidine 19 coordinates ATP. Position 47 (glutamate 47) interacts with K(+). Positions 60 and 103 each coordinate L-methionine. Residues 171–173, 239–242, aspartate 250, 256–257, alanine 273, lysine 277, and lysine 281 each bind ATP; these read DGK, SGRF, and RK. Position 250 (aspartate 250) interacts with L-methionine. Lysine 281 provides a ligand contact to L-methionine.

Belongs to the AdoMet synthase family. As to quaternary structure, homotetramer. The cofactor is Mn(2+). Mg(2+) serves as cofactor. Co(2+) is required as a cofactor. Requires K(+) as cofactor. Expressed in roots, stems and leaves (at protein level).

It is found in the cytoplasm. The catalysed reaction is L-methionine + ATP + H2O = S-adenosyl-L-methionine + phosphate + diphosphate. It participates in amino-acid biosynthesis; S-adenosyl-L-methionine biosynthesis; S-adenosyl-L-methionine from L-methionine: step 1/1. Functionally, catalyzes the formation of S-adenosylmethionine from methionine and ATP. The reaction comprises two steps that are both catalyzed by the same enzyme: formation of S-adenosylmethionine (AdoMet) and triphosphate, and subsequent hydrolysis of the triphosphate. May be involved in the synthesis of betain in response to abiotic stress such as high salinity. The sequence is that of S-adenosylmethionine synthase 2 (SAMS2) from Atriplex nummularia (Old man saltbush).